The primary structure comprises 157 residues: Small ribosomal subunit protein uS7 (157 aa).

The protein belongs to the universal ribosomal protein uS7 family. In terms of assembly, part of the 30S ribosomal subunit. Contacts proteins S9 and S11.

One of the primary rRNA binding proteins, it binds directly to 16S rRNA where it nucleates assembly of the head domain of the 30S subunit. Is located at the subunit interface close to the decoding center, probably blocks exit of the E-site tRNA. The polypeptide is Small ribosomal subunit protein uS7 (Akkermansia muciniphila (strain ATCC BAA-835 / DSM 22959 / JCM 33894 / BCRC 81048 / CCUG 64013 / CIP 107961 / Muc)).